We begin with the raw amino-acid sequence, 445 residues long: GTPase Der (445 aa).

EngA-type G domains follow at residues 3-167 (PVIA…YAGQ) and 180-353 (VKIA…AAAM). GTP is bound by residues 9 to 16 (GRPNVGKS), 56 to 60 (DTGGF), 119 to 122 (NKAE), 186 to 193 (GRPNVGKS), 233 to 237 (DTAGL), and 298 to 301 (NKWD). The 85-residue stretch at 354–438 (AKLPTPKLTR…PLRIEFRSST (85 aa)) folds into the KH-like domain.

This sequence belongs to the TRAFAC class TrmE-Era-EngA-EngB-Septin-like GTPase superfamily. EngA (Der) GTPase family. As to quaternary structure, associates with the 50S ribosomal subunit.

Its function is as follows. GTPase that plays an essential role in the late steps of ribosome biogenesis. The protein is GTPase Der of Paraburkholderia xenovorans (strain LB400).